The chain runs to 185 residues: Peptidyl-tRNA hydrolase (185 aa).

Y14 contributes to the tRNA binding site. H19 serves as the catalytic Proton acceptor. The tRNA site is built by Y65, N67, and N113.

The protein belongs to the PTH family. In terms of assembly, monomer.

It localises to the cytoplasm. It carries out the reaction an N-acyl-L-alpha-aminoacyl-tRNA + H2O = an N-acyl-L-amino acid + a tRNA + H(+). In terms of biological role, hydrolyzes ribosome-free peptidyl-tRNAs (with 1 or more amino acids incorporated), which drop off the ribosome during protein synthesis, or as a result of ribosome stalling. Functionally, catalyzes the release of premature peptidyl moieties from peptidyl-tRNA molecules trapped in stalled 50S ribosomal subunits, and thus maintains levels of free tRNAs and 50S ribosomes. The sequence is that of Peptidyl-tRNA hydrolase from Rickettsia bellii (strain OSU 85-389).